The primary structure comprises 212 residues: Uridine kinase (212 aa).

12 to 19 (GGSGGGKT) is a binding site for ATP.

The protein belongs to the uridine kinase family.

It localises to the cytoplasm. The enzyme catalyses uridine + ATP = UMP + ADP + H(+). It catalyses the reaction cytidine + ATP = CMP + ADP + H(+). It functions in the pathway pyrimidine metabolism; CTP biosynthesis via salvage pathway; CTP from cytidine: step 1/3. The protein operates within pyrimidine metabolism; UMP biosynthesis via salvage pathway; UMP from uridine: step 1/1. In Streptococcus pneumoniae serotype 2 (strain D39 / NCTC 7466), this protein is Uridine kinase.